The chain runs to 384 residues: Ribosomal RNA large subunit methyltransferase G (384 aa).

Belongs to the methyltransferase superfamily. RlmG family.

Its subcellular location is the cytoplasm. It catalyses the reaction guanosine(1835) in 23S rRNA + S-adenosyl-L-methionine = N(2)-methylguanosine(1835) in 23S rRNA + S-adenosyl-L-homocysteine + H(+). Its function is as follows. Specifically methylates the guanine in position 1835 (m2G1835) of 23S rRNA. This is Ribosomal RNA large subunit methyltransferase G from Pseudoalteromonas atlantica (strain T6c / ATCC BAA-1087).